Here is a 386-residue protein sequence, read N- to C-terminus: Alpha-D-kanosaminyltransferase (386 aa).

The protein belongs to the glycosyltransferase group 1 family.

It catalyses the reaction 2'-deamino-2'-hydroxyneamine + UDP-alpha-D-kanosamine = kanamycin A + UDP + H(+). The enzyme catalyses neamine + UDP-alpha-D-kanosamine = kanamycin B + UDP + H(+). The catalysed reaction is paromamine + UDP-alpha-D-kanosamine = kanamycin C + UDP + H(+). It carries out the reaction 2'-deamino-2'-hydroxyparomamine + UDP-alpha-D-kanosamine = kanamycin X + UDP + H(+). It participates in antibiotic biosynthesis; kanamycin biosynthesis. In terms of biological role, glycosyltransferase involved in the biosynthesis of kanamycins by catalyzing the transfer of the hexose kanosamine from UDP-alpha-D-kanosamine to disaccharide precursors. Can also use UDP-alpha-D-glucose as sugar donor with much lower efficiency. In Streptomyces kanamyceticus, this protein is Alpha-D-kanosaminyltransferase (kanE).